Reading from the N-terminus, the 356-residue chain is uncharacterized protein (356 aa).

It belongs to the NAD(P)-dependent epimerase/dehydratase family. NAD(+) is required as a cofactor. It depends on NADP(+) as a cofactor.

Functionally, putative nucleotide sugar epimerase/dehydrogenase. This is an uncharacterized protein from Sinorhizobium fredii (strain NBRC 101917 / NGR234).